Consider the following 225-residue polypeptide: UPF0758 protein Bpet3149 (225 aa).

The MPN domain maps to A103–L225. H174, H176, and D187 together coordinate Zn(2+). The JAMM motif motif lies at H174–D187.

It belongs to the UPF0758 family.

The polypeptide is UPF0758 protein Bpet3149 (Bordetella petrii (strain ATCC BAA-461 / DSM 12804 / CCUG 43448)).